The primary structure comprises 298 residues: 4-hydroxy-tetrahydrodipicolinate synthase (298 aa).

Pyruvate is bound at residue Thr51. Tyr139 acts as the Proton donor/acceptor in catalysis. The Schiff-base intermediate with substrate role is filled by Lys167. Residue Ile209 coordinates pyruvate.

Belongs to the DapA family. In terms of assembly, homotetramer; dimer of dimers.

Its subcellular location is the cytoplasm. It catalyses the reaction L-aspartate 4-semialdehyde + pyruvate = (2S,4S)-4-hydroxy-2,3,4,5-tetrahydrodipicolinate + H2O + H(+). It participates in amino-acid biosynthesis; L-lysine biosynthesis via DAP pathway; (S)-tetrahydrodipicolinate from L-aspartate: step 3/4. Its function is as follows. Catalyzes the condensation of (S)-aspartate-beta-semialdehyde [(S)-ASA] and pyruvate to 4-hydroxy-tetrahydrodipicolinate (HTPA). The chain is 4-hydroxy-tetrahydrodipicolinate synthase from Haemophilus influenzae (strain 86-028NP).